A 30-amino-acid chain; its full sequence is Cliotide T6 (30 aa).

A cross-link (cyclopeptide (Ser-Asn)) is located at residues 1 to 30 (SIPCGESCVYIPCITTIVGCSCKDKVCYKN). Intrachain disulfides connect Cys4–Cys20, Cys8–Cys22, and Cys13–Cys27.

In terms of processing, contains 3 disulfide bonds. This is a cyclic peptide. Expressed in pod but not in flower, stem, shoot, leaf, seed, root and nodule (at protein level).

Its function is as follows. Probably participates in a plant defense mechanism. This Clitoria ternatea (Butterfly pea) protein is Cliotide T6.